Here is a 437-residue protein sequence, read N- to C-terminus: MLSSSHLPTTIVTPKNVPTLGVLVGGGPAPGINGVIGAVTIEAINNGYRVLGFLEGFQNLILQDDSKIVELTIDSVSRIHFEGGSILKTSRANPTKKQEDLQKVVKQLQKFNVSLLVTIGGDDTAFSSMSVAKAANNEIHVVTLPKTIDNDLPLPYGIPTFGYETAREFGANVVRNLMTDASTASRYFIVVAMGRQAGHLALGIGKSAGSHLTLIPEEFLPTTDSTEPEVTFSRICDMIEASIIKRLYTSKKDHGVIVLAEGLLEYMSTDELKQAFGSSLKYDAHDHIMLAELDFGRLVRDEMRERMNRRGLKIAFTEKNLGYELRCAPPNAFDREYTRDLGNGAVRYLLNGGNGALITVQGVKMVPLSFDDLKDPRTGKTRTRQVDVSSEGFQVAKRYMIRLEKKDFEKEETLKGLAATAKCSVEDFIKQFKYLVQ.

Glycine 27 provides a ligand contact to diphosphate. Aspartate 122 contacts Mg(2+). Residues threonine 147–aspartate 149, methionine 193–arginine 195, glutamate 261, and tyrosine 323–arginine 326 contribute to the substrate site. The active-site Proton acceptor is the aspartate 149.

The protein belongs to the phosphofructokinase type A (PFKA) family. PPi-dependent PFK group II subfamily. Clade 'Short' sub-subfamily. As to quaternary structure, homotetramer. Mg(2+) is required as a cofactor. The cofactor is Mn(2+).

It is found in the cytoplasm. The catalysed reaction is beta-D-fructose 6-phosphate + diphosphate = beta-D-fructose 1,6-bisphosphate + phosphate + H(+). It functions in the pathway carbohydrate degradation; glycolysis; D-glyceraldehyde 3-phosphate and glycerone phosphate from D-glucose: step 3/4. Its activity is regulated as follows. Activated by AMP. Probably promotes oligomerization of the enzyme. Functionally, catalyzes the phosphorylation of D-fructose 6-phosphate, the first committing step of glycolysis. Uses inorganic phosphate (PPi) as phosphoryl donor instead of ATP like common ATP-dependent phosphofructokinases (ATP-PFKs), which renders the reaction reversible, and can thus function both in glycolysis and gluconeogenesis. Consistently, PPi-PFK can replace the enzymes of both the forward (ATP-PFK) and reverse (fructose-bisphosphatase (FBPase)) reactions. In Naegleria fowleri (Brain eating amoeba), this protein is Pyrophosphate--fructose 6-phosphate 1-phosphotransferase.